A 224-amino-acid polypeptide reads, in one-letter code: Small ribosomal subunit protein uS3 (224 aa).

Residues 39–107 (IREFLKKKPS…DVWVEIAEVK (69 aa)) enclose the KH type-2 domain.

The protein belongs to the universal ribosomal protein uS3 family. As to quaternary structure, part of the 30S ribosomal subunit. Forms a tight complex with proteins S10 and S14.

In terms of biological role, binds the lower part of the 30S subunit head. Binds mRNA in the 70S ribosome, positioning it for translation. The chain is Small ribosomal subunit protein uS3 from Chlamydia trachomatis serovar D (strain ATCC VR-885 / DSM 19411 / UW-3/Cx).